The following is a 279-amino-acid chain: Probable endonuclease 4 (279 aa).

His69, His109, Glu145, Asp179, His182, His216, Asp229, His231, and Glu261 together coordinate Zn(2+).

It belongs to the AP endonuclease 2 family. Zn(2+) is required as a cofactor.

It carries out the reaction Endonucleolytic cleavage to 5'-phosphooligonucleotide end-products.. In terms of biological role, endonuclease IV plays a role in DNA repair. It cleaves phosphodiester bonds at apurinic or apyrimidinic (AP) sites, generating a 3'-hydroxyl group and a 5'-terminal sugar phosphate. The polypeptide is Probable endonuclease 4 (Chlorobium luteolum (strain DSM 273 / BCRC 81028 / 2530) (Pelodictyon luteolum)).